The primary structure comprises 508 residues: Photosystem II CP47 reaction center protein (508 aa).

6 helical membrane passes run 21–36 (AVHLMHTALVSGWAGS), 101–115 (ITLSGLLFLSAIWHW), 140–156 (GIHLFLSGVLCFGFGAF), 203–218 (IAAGILGILAGLFHLS), 237–252 (VLSSSIAAVFFAAFVV), and 457–472 (TFALIFFFGHIWHGAR).

The protein belongs to the PsbB/PsbC family. PsbB subfamily. As to quaternary structure, PSII is composed of 1 copy each of membrane proteins PsbA, PsbB, PsbC, PsbD, PsbE, PsbF, PsbH, PsbI, PsbJ, PsbK, PsbL, PsbM, PsbT, PsbX, PsbY, PsbZ, Psb30/Ycf12, at least 3 peripheral proteins of the oxygen-evolving complex and a large number of cofactors. It forms dimeric complexes. Binds multiple chlorophylls. PSII binds additional chlorophylls, carotenoids and specific lipids. serves as cofactor.

The protein resides in the plastid. It localises to the chloroplast thylakoid membrane. In terms of biological role, one of the components of the core complex of photosystem II (PSII). It binds chlorophyll and helps catalyze the primary light-induced photochemical processes of PSII. PSII is a light-driven water:plastoquinone oxidoreductase, using light energy to abstract electrons from H(2)O, generating O(2) and a proton gradient subsequently used for ATP formation. This is Photosystem II CP47 reaction center protein from Psilotum nudum (Whisk fern).